The chain runs to 370 residues: Phospho-2-dehydro-3-deoxyheptonate aldolase, tyrosine-inhibited (370 aa).

Serine 2 bears the N-acetylserine mark.

Belongs to the class-I DAHP synthase family.

The catalysed reaction is D-erythrose 4-phosphate + phosphoenolpyruvate + H2O = 7-phospho-2-dehydro-3-deoxy-D-arabino-heptonate + phosphate. Its pathway is metabolic intermediate biosynthesis; chorismate biosynthesis; chorismate from D-erythrose 4-phosphate and phosphoenolpyruvate: step 1/7. With respect to regulation, inhibited by tyrosine. In terms of biological role, stereospecific condensation of phosphoenolpyruvate (PEP) and D-erythrose-4-phosphate (E4P) giving rise to 3-deoxy-D-arabino-heptulosonate-7-phosphate (DAHP). This is Phospho-2-dehydro-3-deoxyheptonate aldolase, tyrosine-inhibited (ARO4) from Saccharomyces cerevisiae (strain ATCC 204508 / S288c) (Baker's yeast).